A 591-amino-acid polypeptide reads, in one-letter code: Protein enabled homolog (591 aa).

In terms of domain architecture, WH1 spans 1–111 (MSEQSICQAR…SAMMHALEVL (111 aa)). Positions 115–136 (ETGPTLPRQNSQLPAQVQNGPS) are enriched in polar residues. The tract at residues 115-146 (ETGPTLPRQNSQLPAQVQNGPSQEELEIQRRQ) is disordered. The residue at position 125 (Ser125) is a Phosphoserine. The stretch at 135–265 (PSQEELEIQR…LEWERERRIS (131 aa)) forms a coiled coil. A run of 9 repeats spans residues 156-160 (LERER), 161-165 (LERER), 166-170 (MERER), 171-175 (LERER), 176-180 (LERER), 181-185 (LERER), 186-190 (LEQEQ), 191-195 (LERER), and 196-200 (QERER). Residues 156-200 (LERERLERERMERERLERERLERERLERERLEQEQLERERQERER) form a 9 X 5 AA tandem repeats of [LMQ]-E-[QR]-E-[QR] region. The span at 221–264 (RLDRERQERQERERLERLERERQERERQEQLEREQLEWERERRI) shows a compositional bias: basic and acidic residues. Residues 221–379 (RLDRERQERQ…PPLPASGFFL (159 aa)) form a disordered region. Phosphoserine; by PKA is present on Ser265. Polar residues predominate over residues 275 to 305 (TPLNSVLGDSSASEPGLQAASQPAETPSQQG). 2 stretches are compositionally biased toward pro residues: residues 311-323 (LAPPPPPPLPPGP) and 330-373 (LPPP…PPLP). Positions 391 to 411 (GLAAAIAGAKLRKVSRMEDTS) are EVH2 block A. The interval 391–588 (GLAAAIAGAK…DAIRQELSKS (198 aa)) is EVH2. The KLKR motif lies at 400–403 (KLRK). Positions 405–549 (SRMEDTSFPS…LSQPSANGVQ (145 aa)) are disordered. Gly residues predominate over residues 432–443 (RGNGPLPLGGSG). Positions 442-459 (SGLMEEMSALLARRRRIA) are EVH2 block B. Phosphothreonine is present on Ile465. 2 positions are modified to phosphoserine: Glu471 and Glu475. Composition is skewed to polar residues over residues 479-491 (PVTSKASSTSTPE) and 499-509 (RTNTMNGSKSP). The residue at position 502 (Thr502) is a Phosphothreonine. Ser506, Ser508, and Ser512 each carry phosphoserine. Over residues 538 to 549 (TPLSQPSANGVQ) the composition is skewed to polar residues. Residues 554-588 (DYDRLKQDILDEMRKELTKLKEELIDAIRQELSKS) are EVH2 block C. Residues 557-587 (RLKQDILDEMRKELTKLKEELIDAIRQELSK) adopt a coiled-coil conformation.

The protein belongs to the Ena/VASP family. Homotetramer. Interacts with APBB1IP, APBB1, PFN1 and ROBO4. Isoforms, containing the polyproline-rich regions with PPLP motifs, bind the WW domain of APBB1IP. Isoforms, containing the PPSY motif, bind, in vitro, to the WW2 and WW3 domains of NEDD4 and to the WW1 domain of YAP1. Binds the SH3 domain of BAIAP2-alpha but only after the autoinhibitory region of BAIAP2-alpha has been blocked by interaction with CDC42. Interacts, via the EVH1/WH1 domain, with the Pro-rich domains from VCL, ZYX and Listeria monocytogenes actA and with TES (via LIM domains). The TES LIM domain and the Pro-rich domains from VCL or ZYX compete for the same binding site. Interaction with ZYX is important for targeting ENAH to focal adhesions and enhances production of actin-rich structures at the apical surface of cells. Interacts, through the Pro-rich region, with the C-terminal SH3 domain of DNMPB. Binds GPHN. Interacts with FAT1 (via EVH1 domains). Heterotrimer with TES and ACTL7A. Interacts with PRPF40A. Post-translationally, NTN1-induced PKA phosphorylation on Ser-265 directly parallels the formation of filopodial protrusions. Expressed in myoepithelia of parotid, breast, bronchial glands and sweat glands. Expressed in colon-rectum muscolaris mucosae epithelium, pancreas acinar ductal epithelium, endometrium epithelium, prostate fibromuscolar stroma and placenta vascular media. Overexpressed in a majority of breast cancer cell lines and primary breast tumor lesions.

It localises to the cytoplasm. It is found in the cytoskeleton. Its subcellular location is the cell projection. The protein localises to the lamellipodium. The protein resides in the filopodium. It localises to the synapse. It is found in the cell junction. Its subcellular location is the focal adhesion. In terms of biological role, ena/VASP proteins are actin-associated proteins involved in a range of processes dependent on cytoskeleton remodeling and cell polarity such as axon guidance and lamellipodial and filopodial dynamics in migrating cells. ENAH induces the formation of F-actin rich outgrowths in fibroblasts. Acts synergistically with BAIAP2-alpha and downstream of NTN1 to promote filipodia formation. This Homo sapiens (Human) protein is Protein enabled homolog (ENAH).